Reading from the N-terminus, the 221-residue chain is Deoxyribose-phosphate aldolase (221 aa).

Catalysis depends on Asp-90, which acts as the Proton donor/acceptor. Lys-152 (schiff-base intermediate with acetaldehyde) is an active-site residue. Catalysis depends on Lys-181, which acts as the Proton donor/acceptor.

Belongs to the DeoC/FbaB aldolase family. DeoC type 1 subfamily.

It localises to the cytoplasm. The catalysed reaction is 2-deoxy-D-ribose 5-phosphate = D-glyceraldehyde 3-phosphate + acetaldehyde. It functions in the pathway carbohydrate degradation; 2-deoxy-D-ribose 1-phosphate degradation; D-glyceraldehyde 3-phosphate and acetaldehyde from 2-deoxy-alpha-D-ribose 1-phosphate: step 2/2. In terms of biological role, catalyzes a reversible aldol reaction between acetaldehyde and D-glyceraldehyde 3-phosphate to generate 2-deoxy-D-ribose 5-phosphate. This is Deoxyribose-phosphate aldolase from Syntrophotalea carbinolica (strain DSM 2380 / NBRC 103641 / GraBd1) (Pelobacter carbinolicus).